We begin with the raw amino-acid sequence, 375 residues long: MARDYYAILGVERDATDNEIKKAYRKLARKYHPDVNDTEEAAEKFSKISIAQEVLLDAEKRRIVDMGGDPMAQGGGDAGYGAGGGLGDIFEAFFGGGGGSRGPRSRVQPGSDALLRTTLTLEEAYLGTKKPITIDTAILCDRCEGTGSKSKSKPNVCSTCNGSGEIQQMQRSFLGNVMTSSPCPTCRGTGEVIPDPCDKCGGDGRVRTQRDLIVNVPAGIADGMRIRMAGQGEVGPGGGPAGDLYIEVMMQQHPVFQREGNDLHMSVHVPMVDAALGATTSVESLSGDAIDFEIPAGVQPAETIVIEGKGMPQLRGEGFGNMIAHVDVSIPTQLDEKSKELLNKLRDHRSDESSVRTADDSDDSLFGRLRNRFRR.

The region spanning 4–68 (DYYAILGVER…EKRRIVDMGG (65 aa)) is the J domain. A CR-type zinc finger spans residues 127–209 (GTKKPITIDT…CGGDGRVRTQ (83 aa)). Residues Cys-140, Cys-143, Cys-157, Cys-160, Cys-183, Cys-186, Cys-197, and Cys-200 each contribute to the Zn(2+) site. 4 CXXCXGXG motif repeats span residues 140–147 (CDRCEGTG), 157–164 (CSTCNGSG), 183–190 (CPTCRGTG), and 197–204 (CDKCGGDG).

It belongs to the DnaJ family. In terms of assembly, homodimer. Zn(2+) serves as cofactor.

The protein localises to the cytoplasm. Functionally, participates actively in the response to hyperosmotic and heat shock by preventing the aggregation of stress-denatured proteins and by disaggregating proteins, also in an autonomous, DnaK-independent fashion. Unfolded proteins bind initially to DnaJ; upon interaction with the DnaJ-bound protein, DnaK hydrolyzes its bound ATP, resulting in the formation of a stable complex. GrpE releases ADP from DnaK; ATP binding to DnaK triggers the release of the substrate protein, thus completing the reaction cycle. Several rounds of ATP-dependent interactions between DnaJ, DnaK and GrpE are required for fully efficient folding. Also involved, together with DnaK and GrpE, in the DNA replication of plasmids through activation of initiation proteins. The chain is Chaperone protein DnaJ 1 from Corynebacterium diphtheriae (strain ATCC 700971 / NCTC 13129 / Biotype gravis).